Here is a 183-residue protein sequence, read N- to C-terminus: Der GTPase-activating protein YihI (183 aa).

The tract at residues methionine 1–lysine 101 is disordered. Basic and acidic residues-rich tracts occupy residues lysine 22 to glutamate 46 and lysine 92 to lysine 101.

The protein belongs to the YihI family. As to quaternary structure, interacts with Der.

Its function is as follows. A GTPase-activating protein (GAP) that modifies Der/EngA GTPase function. May play a role in ribosome biogenesis. This Shewanella oneidensis (strain ATCC 700550 / JCM 31522 / CIP 106686 / LMG 19005 / NCIMB 14063 / MR-1) protein is Der GTPase-activating protein YihI.